A 274-amino-acid chain; its full sequence is Coagulation factor IX (274 aa).

A Sulfotyrosine modification is found at Tyr-23. Asn-25 carries an N-linked (GlcNAc...) asparagine glycan. Residue Ser-26 is modified to Phosphoserine. Asn-35 carries N-linked (GlcNAc...) asparagine glycosylation. Residue Thr-37 is glycosylated (O-linked (GalNAc...) threonine). The N-linked (GlcNAc...) asparagine glycan is linked to Asn-40. The 226-residue stretch at Val-49–Val-274 folds into the Peptidase S1 domain. A disulfide bond links Cys-74 and Cys-90. The active-site Charge relay system is the His-89. 4 residues coordinate Ca(2+): Glu-103, Asn-105, Glu-110, and Glu-113. Residue Asn-128 is glycosylated (N-linked (GlcNAc...) asparagine). Catalysis depends on Asp-137, which acts as the Charge relay system. 2 disulfide bridges follow: Cys-204–Cys-218 and Cys-229–Cys-257. Ser-233 serves as the catalytic Charge relay system.

It belongs to the peptidase S1 family. As to quaternary structure, heterodimer of a light chain and a heavy chain; disulfide-linked. Interacts (inactive and activated) with F11 (activated) in calcium-dependent manner. Interacts with SERPINC1. In terms of processing, activated by factor XIa, which excises the activation peptide. The propeptide can also be removed by snake venom protease. Activated by coagulation factor VIIa-tissue factor (F7-F3) complex in calcium-dependent manner.

The protein resides in the secreted. The enzyme catalyses Selective cleavage of Arg-|-Ile bond in factor X to form factor Xa.. Functionally, factor IX is a vitamin K-dependent plasma protein that participates in the intrinsic pathway of blood coagulation by converting factor X to its active form in the presence of Ca(2+) ions, phospholipids, and factor VIIIa. The sequence is that of Coagulation factor IX (F9) from Ovis aries (Sheep).